A 175-amino-acid chain; its full sequence is GTP-dependent dephospho-CoA kinase (175 aa).

Positions 48, 49, 50, 66, and 124 each coordinate GTP.

It belongs to the GTP-dependent DPCK family.

The enzyme catalyses 3'-dephospho-CoA + GTP = GDP + CoA + H(+). The protein operates within cofactor biosynthesis; coenzyme A biosynthesis. Functionally, catalyzes the GTP-dependent phosphorylation of the 3'-hydroxyl group of dephosphocoenzyme A to form coenzyme A (CoA). This Thermofilum pendens (strain DSM 2475 / Hrk 5) protein is GTP-dependent dephospho-CoA kinase.